The sequence spans 234 residues: DNA repair protein RecO (234 aa).

Belongs to the RecO family.

Functionally, involved in DNA repair and RecF pathway recombination. In Coxiella burnetii (strain RSA 331 / Henzerling II), this protein is DNA repair protein RecO.